Consider the following 295-residue polypeptide: MAAVVALGANVLSAKSIICDIEGTTTSISFVKDTLFPYALKHVEGYLKNNWNEEATKTVVTALREQAEEDKKAEVEGVVPIPTGDSEDIIPEIVKNVEWQMSLDRKTGSLKTLQGLVWAKGYKDGSIKGHVYDDVQKAFEQWTENGRKIYIYSSGSVDAQKLLFEHSEQGDLLKYLSGHYDTKIGAKREKESYTSILKNIESSPEEALFLTDVYAEAKAAKEAGLNVVLLDRPGNSELSEEERKDFPVIATFSDLSFAAETKEENGGATNGKRKIEETNDDVAEEDKAQVYPNKK.

The Mg(2+) site is built by aspartate 20 and glutamate 22. Residues 153–154 and lysine 187 contribute to the substrate site; that span reads SS. Mg(2+) is bound at residue aspartate 212. Residues 260–295 form a disordered region; sequence ETKEENGGATNGKRKIEETNDDVAEEDKAQVYPNKK.

The protein belongs to the HAD-like hydrolase superfamily. MasA/MtnC family. As to quaternary structure, monomer. The cofactor is Mg(2+).

Its subcellular location is the cytoplasm. It is found in the nucleus. It carries out the reaction 5-methylsulfanyl-2,3-dioxopentyl phosphate + H2O = 1,2-dihydroxy-5-(methylsulfanyl)pent-1-en-3-one + phosphate. It participates in amino-acid biosynthesis; L-methionine biosynthesis via salvage pathway; L-methionine from S-methyl-5-thio-alpha-D-ribose 1-phosphate: step 3/6. Its pathway is amino-acid biosynthesis; L-methionine biosynthesis via salvage pathway; L-methionine from S-methyl-5-thio-alpha-D-ribose 1-phosphate: step 4/6. Functionally, bifunctional enzyme that catalyzes the enolization of 2,3-diketo-5-methylthiopentyl-1-phosphate (DK-MTP-1-P) into the intermediate 2-hydroxy-3-keto-5-methylthiopentenyl-1-phosphate (HK-MTPenyl-1-P), which is then dephosphorylated to form the acireductone 1,2-dihydroxy-3-keto-5-methylthiopentene (DHK-MTPene). The sequence is that of Enolase-phosphatase E1 from Anopheles gambiae (African malaria mosquito).